The primary structure comprises 21 residues: Peptide Hact-2 (21 aa).

Intrachain disulfides connect Cys1-Cys18, Cys5-Cys14, and Cys9-Cys20.

As to expression, expressed in tentacles.

It localises to the nematocyst. It is found in the secreted. Functionally, peptide of unknown function. Does not exhibit antimicrobial activity against Escherichia coli and Staphylococcus aureus. Promotes cell proliferation of human fibroblast skin cells. Does not exhibit any effect on voltage-gated ion channels, including potassium, sodium, and calcium channels. In Heliofungia actiniformis (Mushroom coral), this protein is Peptide Hact-2.